The sequence spans 206 residues: Smr domain-containing protein C11H11.03c (206 aa).

Residues 75–150 (IDLHGLYIDE…NEGRIYVYLP (76 aa)) form the Smr domain.

It localises to the cytoplasm. It is found in the nucleus. The chain is Smr domain-containing protein C11H11.03c from Schizosaccharomyces pombe (strain 972 / ATCC 24843) (Fission yeast).